Here is a 357-residue protein sequence, read N- to C-terminus: UPF0283 membrane protein BCAN_A1047 (357 aa).

The disordered stretch occupies residues 1-36; the sequence is MSDKTPRKPTAFRLEQPARVSAASEQEEPRRPRAVK. Residues 27–36 are compositionally biased toward basic and acidic residues; that stretch reads EEPRRPRAVK. Transmembrane regions (helical) follow at residues 78 to 98 and 109 to 129; these read ILFGALGILVSFAIGIWTEDL and LGWTALGVAMVALAAFAAIIL.

The protein belongs to the UPF0283 family.

Its subcellular location is the cell inner membrane. This chain is UPF0283 membrane protein BCAN_A1047, found in Brucella canis (strain ATCC 23365 / NCTC 10854 / RM-666).